We begin with the raw amino-acid sequence, 875 residues long: Ribonucleases P/MRP protein subunit POP1 (875 aa).

Disordered regions lie at residues M1–L20, E35–G54, and E119–H140. The segment covering A39–G54 has biased composition (polar residues). The residue at position 524 (T524) is a Phosphothreonine.

In terms of assembly, component of nuclear RNase P and RNase MRP complexes. RNase P consists of an RNA moiety and at least 9 protein subunits including POP1, POP3, POP4, POP5, POP6, POP7, POP8, RPP1 and RPR2. RNase MRP complex consists of an RNA moiety and at least 10 protein subunits including POP1, POP3, POP4, POP5, POP6, POP7, POP8, RMP1, RPP1 and SNM1, many of which are shared with the RNase P complex.

The protein resides in the cytoplasm. The protein localises to the nucleus. It catalyses the reaction Endonucleolytic cleavage of RNA, removing 5'-extranucleotides from tRNA precursor.. Its function is as follows. Required for processing of 5.8S rRNA (short form) at site A3 and for 5' and 3' processing of pre-tRNA. The protein is Ribonucleases P/MRP protein subunit POP1 (POP1) of Saccharomyces cerevisiae (strain ATCC 204508 / S288c) (Baker's yeast).